A 39-amino-acid polypeptide reads, in one-letter code: MTTDRTYPIFTVRWLAVHGLAVPTVFFLGSISAMQFIQR.

A helical transmembrane segment spans residues 14 to 30 (WLAVHGLAVPTVFFLGS). Heme is bound at residue H18.

Belongs to the PsbE/PsbF family. In terms of assembly, heterodimer of an alpha subunit and a beta subunit. PSII is composed of 1 copy each of membrane proteins PsbA, PsbB, PsbC, PsbD, PsbE, PsbF, PsbH, PsbI, PsbJ, PsbK, PsbL, PsbM, PsbT, PsbX, PsbY, PsbZ, Psb30/Ycf12, at least 3 peripheral proteins of the oxygen-evolving complex and a large number of cofactors. It forms dimeric complexes. Requires heme b as cofactor.

It is found in the plastid. The protein resides in the chloroplast thylakoid membrane. Functionally, this b-type cytochrome is tightly associated with the reaction center of photosystem II (PSII). PSII is a light-driven water:plastoquinone oxidoreductase that uses light energy to abstract electrons from H(2)O, generating O(2) and a proton gradient subsequently used for ATP formation. It consists of a core antenna complex that captures photons, and an electron transfer chain that converts photonic excitation into a charge separation. This is Cytochrome b559 subunit beta from Cedrus deodara (Deodar cedar).